A 554-amino-acid polypeptide reads, in one-letter code: Glucose-6-phosphate isomerase (554 aa).

The active-site Proton donor is the glutamate 358. Residues histidine 389 and lysine 515 contribute to the active site. The segment covering 527 to 540 has biased composition (polar residues); it reads ADNSPAPQSDSSTD. The segment at 527-554 is disordered; it reads ADNSPAPQSDSSTDALVRRYRSERGRTS. Over residues 542–554 the composition is skewed to basic and acidic residues; it reads LVRRYRSERGRTS.

It belongs to the GPI family.

It is found in the cytoplasm. It carries out the reaction alpha-D-glucose 6-phosphate = beta-D-fructose 6-phosphate. Its pathway is carbohydrate biosynthesis; gluconeogenesis. The protein operates within carbohydrate degradation; glycolysis; D-glyceraldehyde 3-phosphate and glycerone phosphate from D-glucose: step 2/4. Catalyzes the reversible isomerization of glucose-6-phosphate to fructose-6-phosphate. This chain is Glucose-6-phosphate isomerase, found in Mycobacterium avium (strain 104).